The following is a 385-amino-acid chain: Probable splicing factor YJU2B (385 aa).

The tract at residues 1 to 26 (MGERKGQNKYYPPDFNPEKHGSLNRY) is disordered. S40 is subject to Phosphoserine. Positions 182–215 (LNSMLRRHFREKKKAMQEEEEKDQALQAKANLAI) form a coiled coil. Positions 256–385 (FPSAQGPSTS…VADYSDSESE (130 aa)) are disordered. A compositionally biased stretch (polar residues) spans 260 to 270 (QGPSTSSSKAS). S306 bears the Phosphoserine mark. 2 stretches are compositionally biased toward polar residues: residues 307–316 (PQCTADNSLS) and 359–373 (GSSQEDLLHPNTPNA).

This sequence belongs to the CWC16 family.

The protein localises to the nucleus. Its function is as follows. May be involved in mRNA splicing. The chain is Probable splicing factor YJU2B from Rattus norvegicus (Rat).